The following is a 417-amino-acid chain: Serine hydroxymethyltransferase 1 (417 aa).

(6S)-5,6,7,8-tetrahydrofolate-binding positions include Leu-121 and Gly-125–Leu-127. Lys-230 bears the N6-(pyridoxal phosphate)lysine mark. Ser-355 to Phe-357 serves as a coordination point for (6S)-5,6,7,8-tetrahydrofolate.

This sequence belongs to the SHMT family. As to quaternary structure, homodimer. It depends on pyridoxal 5'-phosphate as a cofactor.

It localises to the cytoplasm. It catalyses the reaction (6R)-5,10-methylene-5,6,7,8-tetrahydrofolate + glycine + H2O = (6S)-5,6,7,8-tetrahydrofolate + L-serine. Its pathway is one-carbon metabolism; tetrahydrofolate interconversion. It functions in the pathway amino-acid biosynthesis; glycine biosynthesis; glycine from L-serine: step 1/1. Catalyzes the reversible interconversion of serine and glycine with tetrahydrofolate (THF) serving as the one-carbon carrier. This reaction serves as the major source of one-carbon groups required for the biosynthesis of purines, thymidylate, methionine, and other important biomolecules. Also exhibits THF-independent aldolase activity toward beta-hydroxyamino acids, producing glycine and aldehydes, via a retro-aldol mechanism. The polypeptide is Serine hydroxymethyltransferase 1 (Pseudomonas aeruginosa (strain ATCC 15692 / DSM 22644 / CIP 104116 / JCM 14847 / LMG 12228 / 1C / PRS 101 / PAO1)).